A 333-amino-acid polypeptide reads, in one-letter code: 4-hydroxyproline 2-epimerase (333 aa).

The active-site Proton acceptor is Cys91. Substrate-binding positions include 92-93, His225, and Asp250; that span reads GH. Cys254 acts as the Proton donor in catalysis. 255-256 contributes to the substrate binding site; sequence GT.

Belongs to the proline racemase family.

It catalyses the reaction trans-4-hydroxy-L-proline = cis-4-hydroxy-D-proline. Catalyzes the epimerization of trans-4-hydroxy-L-proline (t4LHyp) to cis-4-hydroxy-D-proline (c4DHyp). Is likely involved in a degradation pathway that converts t4LHyp to alpha-ketoglutarate. Displays no proline racemase activity. The sequence is that of 4-hydroxyproline 2-epimerase from Streptosporangium roseum (strain ATCC 12428 / DSM 43021 / JCM 3005 / KCTC 9067 / NCIMB 10171 / NRRL 2505 / NI 9100).